A 127-amino-acid polypeptide reads, in one-letter code: Small ribosomal subunit protein uS13 (127 aa).

Residues 90–127 (KRHREGLPVNGQRTRTNARTRKGKRKTVAGRSQSTQKK) are disordered. A compositionally biased stretch (basic residues) spans 105–117 (TNARTRKGKRKTV).

The protein belongs to the universal ribosomal protein uS13 family. Part of the 30S ribosomal subunit. Forms a loose heterodimer with protein S19. Forms two bridges to the 50S subunit in the 70S ribosome.

Located at the top of the head of the 30S subunit, it contacts several helices of the 16S rRNA. In the 70S ribosome it contacts the 23S rRNA (bridge B1a) and protein L5 of the 50S subunit (bridge B1b), connecting the 2 subunits; these bridges are implicated in subunit movement. Contacts the tRNAs in the A and P-sites. The protein is Small ribosomal subunit protein uS13 of Salinibacter ruber (strain DSM 13855 / M31).